A 219-amino-acid polypeptide reads, in one-letter code: Orotate phosphoribosyltransferase (219 aa).

Lys-26 is a binding site for 5-phospho-alpha-D-ribose 1-diphosphate. 34 to 35 (FF) is a binding site for orotate. Residues 72 to 73 (YK), Arg-98, Lys-99, Lys-102, His-104, and 124 to 132 (DDVITAGTA) contribute to the 5-phospho-alpha-D-ribose 1-diphosphate site. Orotate is bound by residues Thr-128 and Arg-156.

The protein belongs to the purine/pyrimidine phosphoribosyltransferase family. PyrE subfamily. Homodimer. Mg(2+) is required as a cofactor.

The enzyme catalyses orotidine 5'-phosphate + diphosphate = orotate + 5-phospho-alpha-D-ribose 1-diphosphate. The protein operates within pyrimidine metabolism; UMP biosynthesis via de novo pathway; UMP from orotate: step 1/2. Catalyzes the transfer of a ribosyl phosphate group from 5-phosphoribose 1-diphosphate to orotate, leading to the formation of orotidine monophosphate (OMP). This chain is Orotate phosphoribosyltransferase, found in Stenotrophomonas maltophilia (strain K279a).